We begin with the raw amino-acid sequence, 432 residues long: Phytase AppA (432 aa).

Residues 1 to 22 (MKAILIPFLSLLIPLTPQSAFA) form the signal peptide. Arg38 provides a ligand contact to 1D-myo-inositol hexakisphosphate. His39 functions as the Nucleophile in the catalytic mechanism. 1D-myo-inositol hexakisphosphate-binding positions include 42–46 (RAPTK) and Arg114. 4 cysteine pairs are disulfide-bonded: Cys99-Cys130, Cys155-Cys430, Cys200-Cys210, and Cys404-Cys413. 1D-myo-inositol hexakisphosphate is bound by residues Arg289 and 325-327 (HDT). Asp326 (proton donor) is an active-site residue.

Belongs to the histidine acid phosphatase family. As to quaternary structure, monomer.

It is found in the periplasm. The catalysed reaction is 1D-myo-inositol hexakisphosphate + H2O = 1D-myo-inositol 1,2,3,4,5-pentakisphosphate + phosphate. It carries out the reaction 1D-myo-inositol 1,2,3,4,5-pentakisphosphate + H2O = 1D-myo-inositol 2,3,4,5-tetrakisphosphate + phosphate. It catalyses the reaction 1D-myo-inositol 2,3,4,5-tetrakisphosphate + H2O = 1D-myo-inositol 2,4,5-triphosphate + phosphate. The enzyme catalyses 1D-myo-inositol 2,4,5-triphosphate + H2O = 1D-myo-inositol 2,5-bisphosphate + phosphate. The catalysed reaction is 1D-myo-inositol 2,5-bisphosphate + H2O = 1D-myo-inositol 2-phosphate + phosphate. It carries out the reaction GTP + H2O = GDP + phosphate + H(+). With respect to regulation, contains three consecutive and one non-consecutive disulfide bonds and shows a strong dependence on DsbC for its full activity. Competitively inhibited by tartaric acid and by sodium fluorid. Its function is as follows. Catalyzes the hydrolysis of phytate (or myo-inositol hexakisphosphate, an indigestible organic form of phosphorus that is found in many plant tissues) to myo-inositol and inorganic phosphate. Dephosphorylates phytate in a stereospecific way by sequential removal of phosphate groups to produce myo-inositol 2-monophosphate. Also shows phosphoanhydride phosphatase activity and hydrolyzes the distal phosphoryl residues of GTP, the 5'-beta-phosphoryl residue of the regulatory nucleotide ppGpp and tripolyphosphates. Does not split most phosphomonoesters with the exception of the synthetic substrate p-nitrophenyl phosphate (pNPP), 2,3-bisphosphoglycerate and fructose 1,6-bisphosphate. This chain is Phytase AppA, found in Escherichia coli (strain K12).